A 764-amino-acid chain; its full sequence is 1,4-alpha-glucan branching enzyme GlgB (764 aa).

The Nucleophile role is filled by Asp431. Catalysis depends on Glu484, which acts as the Proton donor.

It belongs to the glycosyl hydrolase 13 family. GlgB subfamily. In terms of assembly, monomer.

The enzyme catalyses Transfers a segment of a (1-&gt;4)-alpha-D-glucan chain to a primary hydroxy group in a similar glucan chain.. Its pathway is glycan biosynthesis; glycogen biosynthesis. In terms of biological role, catalyzes the formation of the alpha-1,6-glucosidic linkages in glycogen by scission of a 1,4-alpha-linked oligosaccharide from growing alpha-1,4-glucan chains and the subsequent attachment of the oligosaccharide to the alpha-1,6 position. The chain is 1,4-alpha-glucan branching enzyme GlgB from Synechococcus sp. (strain CC9902).